Consider the following 137-residue polypeptide: Gonadotropin subunit beta-1 (137 aa).

An N-terminal signal peptide occupies residues 1–24 (MYCTHLRMLQLVVMATLWVTPVRA). 5 disulfides stabilise this stretch: cysteine 32–cysteine 78, cysteine 46–cysteine 93, cysteine 55–cysteine 108, cysteine 59–cysteine 110, and cysteine 113–cysteine 120. The N-linked (GlcNAc...) asparagine glycan is linked to asparagine 36.

This sequence belongs to the glycoprotein hormones subunit beta family. As to quaternary structure, heterodimer of an alpha and a beta chain.

It is found in the secreted. Functionally, involved in gametogenesis and steroidogenesis. This is Gonadotropin subunit beta-1 (cgba) from Coregonus autumnalis (Arctic cisco).